A 424-amino-acid chain; its full sequence is UPF0229 protein Avin_46880 (424 aa).

Positions 57 to 108 (RDIDEPVLHHGRGGKQTIVHPGNKEFTAGERIPRPSGGGGGGSGSGKASNSG) are disordered. The span at 92 to 101 (SGGGGGGSGS) shows a compositional bias: gly residues.

Belongs to the UPF0229 family.

The polypeptide is UPF0229 protein Avin_46880 (Azotobacter vinelandii (strain DJ / ATCC BAA-1303)).